Reading from the N-terminus, the 380-residue chain is Hydrogenase maturation factor HypD2 (380 aa).

The Fe cation site is built by cysteine 36, cysteine 64, and cysteine 67.

This sequence belongs to the HypD family. The cofactor is [4Fe-4S] cluster.

It functions in the pathway protein modification; [NiFe] hydrogenase maturation. Its function is as follows. Involved in the maturation of [NiFe] hydrogenases. Involved in the biosynthesis of the Fe(CN)(2)CO cofactor. This Bradyrhizobium diazoefficiens (strain JCM 10833 / BCRC 13528 / IAM 13628 / NBRC 14792 / USDA 110) protein is Hydrogenase maturation factor HypD2 (hypD2).